A 472-amino-acid chain; its full sequence is L-fuculokinase (472 aa).

This sequence belongs to the FGGY kinase family. Requires a divalent metal cation as cofactor.

It catalyses the reaction L-fuculose + ATP = L-fuculose 1-phosphate + ADP + H(+). Its pathway is carbohydrate degradation; L-fucose degradation; L-lactaldehyde and glycerone phosphate from L-fucose: step 2/3. Functionally, catalyzes the phosphorylation of L-fuculose. This is L-fuculokinase from Salmonella typhi.